Consider the following 878-residue polypeptide: Alanine--tRNA ligase (878 aa).

Zn(2+) is bound by residues histidine 565, histidine 569, cysteine 667, and histidine 671.

This sequence belongs to the class-II aminoacyl-tRNA synthetase family. Requires Zn(2+) as cofactor.

The protein resides in the cytoplasm. It catalyses the reaction tRNA(Ala) + L-alanine + ATP = L-alanyl-tRNA(Ala) + AMP + diphosphate. Its function is as follows. Catalyzes the attachment of alanine to tRNA(Ala) in a two-step reaction: alanine is first activated by ATP to form Ala-AMP and then transferred to the acceptor end of tRNA(Ala). Also edits incorrectly charged Ser-tRNA(Ala) and Gly-tRNA(Ala) via its editing domain. This Desulforamulus reducens (strain ATCC BAA-1160 / DSM 100696 / MI-1) (Desulfotomaculum reducens) protein is Alanine--tRNA ligase.